The following is a 342-amino-acid chain: Endolytic peptidoglycan transglycosylase RlpA (342 aa).

The N-terminal stretch at 1-26 (MSKRVRSSLILPAVCGLGLAAVLLSS) is a signal peptide. C27 carries N-palmitoyl cysteine lipidation. C27 carries S-diacylglycerol cysteine lipidation. The SPOR domain occupies 261-342 (SLPADGLYLQ…LGQPTLVRPD (82 aa)).

This sequence belongs to the RlpA family.

Its subcellular location is the cell membrane. In terms of biological role, lytic transglycosylase with a strong preference for naked glycan strands that lack stem peptides. The protein is Endolytic peptidoglycan transglycosylase RlpA of Pseudomonas aeruginosa (strain ATCC 15692 / DSM 22644 / CIP 104116 / JCM 14847 / LMG 12228 / 1C / PRS 101 / PAO1).